Consider the following 215-residue polypeptide: Pyridoxine/pyridoxamine 5'-phosphate oxidase (215 aa).

Substrate is bound by residues 9–12 and K69; that span reads RRDY. FMN contacts are provided by residues 64-69, 79-80, K86, and Q108; these read RVLLLK and FT. The substrate site is built by Y126, R130, and S134. FMN is bound by residues 143 to 144 and W188; that span reads QS. 194-196 contacts substrate; that stretch reads RLH. R198 is an FMN binding site.

It belongs to the pyridoxamine 5'-phosphate oxidase family. Homodimer. Requires FMN as cofactor.

It carries out the reaction pyridoxamine 5'-phosphate + O2 + H2O = pyridoxal 5'-phosphate + H2O2 + NH4(+). The enzyme catalyses pyridoxine 5'-phosphate + O2 = pyridoxal 5'-phosphate + H2O2. It participates in cofactor metabolism; pyridoxal 5'-phosphate salvage; pyridoxal 5'-phosphate from pyridoxamine 5'-phosphate: step 1/1. Its pathway is cofactor metabolism; pyridoxal 5'-phosphate salvage; pyridoxal 5'-phosphate from pyridoxine 5'-phosphate: step 1/1. Catalyzes the oxidation of either pyridoxine 5'-phosphate (PNP) or pyridoxamine 5'-phosphate (PMP) into pyridoxal 5'-phosphate (PLP). This chain is Pyridoxine/pyridoxamine 5'-phosphate oxidase, found in Pseudomonas putida (strain GB-1).